The chain runs to 127 residues: Acetylcholine receptor subunit alpha (127 aa).

Over alanine 1–cysteine 127 the chain is Extracellular. Cysteine 33 and cysteine 47 are disulfide-bonded. Residues asparagine 46 and asparagine 94 are each glycosylated (N-linked (GlcNAc...) asparagine). Cysteine 97 and cysteine 98 are joined by a disulfide.

The protein belongs to the ligand-gated ion channel (TC 1.A.9) family. Acetylcholine receptor (TC 1.A.9.1) subfamily. Alpha-1/CHRNA1 sub-subfamily. One of the alpha chains that assemble within the acetylcholine receptor, a pentamer of two alpha chains, a beta, a delta, and a gamma or epsilon chains.

It is found in the postsynaptic cell membrane. The protein localises to the cell membrane. It carries out the reaction K(+)(in) = K(+)(out). It catalyses the reaction Na(+)(in) = Na(+)(out). In terms of biological role, upon acetylcholine binding, the AChR responds by an extensive change in conformation that affects all subunits and leads to opening of an ion-conducting channel across the plasma membrane. Does not bind alpha-bungarotoxin. The sequence is that of Acetylcholine receptor subunit alpha (CHRNA1) from Natrix tessellata (Dice snake).